Here is a 738-residue protein sequence, read N- to C-terminus: Ethylene receptor (738 aa).

The next 3 helical transmembrane spans lie at 23 to 43, 54 to 74, and 89 to 109; these read ISDF…IYFV, VLVQ…INLW, and IAKV…VHII. The Cu cation site is built by cysteine 65 and histidine 69. A GAF domain is found at 158-307; the sequence is DRHTILRTTL…VVADQVAVAL (150 aa). The 240-residue stretch at 350–589 folds into the Histidine kinase domain; that stretch reads VMNHEMRTPM…IFIVKLGIPE (240 aa). Histidine 353 is subject to Phosphohistidine; by autocatalysis. The region spanning 615–730 is the Response regulatory domain; the sequence is KVLLMDDNGV…KMRSVLSDLL (116 aa). The residue at position 663 (aspartate 663) is a 4-aspartylphosphate.

The protein belongs to the ethylene receptor family. Homodimer; disulfide-linked. Cu cation serves as cofactor. In terms of processing, activation probably requires a transfer of a phosphate group between a His in the transmitter domain and an Asp of the receiver domain. Higher expression in arils than in seeds.

It localises to the endoplasmic reticulum membrane. It carries out the reaction ATP + protein L-histidine = ADP + protein N-phospho-L-histidine.. Its function is as follows. May act early in the ethylene signal transduction pathway, possibly as an ethylene receptor, or as a regulator of the pathway. The sequence is that of Ethylene receptor (ETR1) from Passiflora edulis (Passion fruit).